The chain runs to 153 residues: Prostaglandin E synthase (153 aa).

The Lumenal segment spans residues 1–13 (MPPPVLALVSGQA). A helical transmembrane segment spans residues 14-42 (LPAFLLCSTLLVIKMYVVAVITGQVRLRK). A glutathione-binding site is contributed by arginine 39. Residues 43–61 (KAFANPEDALRHGGLQYCR) are Cytoplasmic-facing. The helical transmembrane segment at 62-91 (SDQDVDRCLRAHRNDMETIYPFLFLGFVYS) threads the bilayer. 74-78 (RNDME) serves as a coordination point for glutathione. The Lumenal portion of the chain corresponds to 92–96 (FLGPD). Residues 97–120 (PFIAQMHFLVFFLGRMVHTVAYLG) form a helical membrane-spanning segment. Positions 114 and 118 each coordinate glutathione. At 121–124 (KLRA) the chain is on the cytoplasmic side. A helical transmembrane segment spans residues 125–153 (PTRSLAYTVAQLPCASMALQIVWEAACHL). 127-131 (RSLAY) serves as a coordination point for glutathione.

It belongs to the MAPEG family. As to quaternary structure, homotrimer. Requires glutathione as cofactor.

The protein resides in the membrane. It is found in the cytoplasm. The protein localises to the perinuclear region. It catalyses the reaction prostaglandin H2 = prostaglandin E2. The catalysed reaction is 2-glyceryl-prostaglandin H2 = 2-glyceryl-prostaglandin E2. It carries out the reaction prostaglandin G2 = (15S)-15-hydroperoxy-prostaglandin E2. The enzyme catalyses 1-chloro-2,4-dinitrobenzene + glutathione = 2,4-dinitrophenyl-S-glutathione + chloride + H(+). It catalyses the reaction (5S)-hydroperoxy-(6E,8Z,11Z,14Z)-eicosatetraenoate + 2 glutathione = (5S)-hydroxy-(6E,8Z,11Z,14Z)-eicosatetraenoate + glutathione disulfide + H2O. Its pathway is lipid metabolism; prostaglandin biosynthesis. Its function is as follows. Terminal enzyme of the cyclooxygenase (COX)-2-mediated prostaglandin E2 (PGE2) biosynthetic pathway. Catalyzes the glutathione-dependent oxidoreduction of prostaglandin endoperoxide H2 (PGH2) to prostaglandin E2 (PGE2) in response to inflammatory stimuli. Plays a key role in inflammation response, fever and pain. Also catalyzes the oxidoreduction of endocannabinoids into prostaglandin glycerol esters and PGG2 into 15-hydroperoxy-PGE2. In addition, displays low glutathione transferase and glutathione-dependent peroxidase activities, toward 1-chloro-2,4-dinitrobenzene and 5-hydroperoxyicosatetraenoic acid (5-HPETE), respectively. The protein is Prostaglandin E synthase (PTGES) of Canis lupus familiaris (Dog).